The sequence spans 503 residues: Alpha-1B-glycoprotein (503 aa).

A signal peptide spans 1–21 (MSAWAALLLLWGLSLSPVTEQ). Ig-like V-type domains follow at residues 27–115 (PRPS…EVTG), 117–204 (EPLP…TVTI), 208–305 (DPPP…LVLS), 307–405 (GTLP…LRVD), and 406–501 (GPLP…LRVA). Residues Cys-49 and Cys-96 are joined by a disulfide bond. Residues Asn-137 and Asn-182 are each glycosylated (N-linked (GlcNAc...) asparagine). Cystine bridges form between Cys-142–Cys-185, Cys-235–Cys-282, Cys-333–Cys-382, and Cys-431–Cys-478. An N-linked (GlcNAc...) asparagine glycan is attached at Asn-379.

Interacts with CRISP3. As to expression, plasma.

Its subcellular location is the secreted. This is Alpha-1B-glycoprotein from Bos taurus (Bovine).